A 194-amino-acid chain; its full sequence is dTTP/UTP pyrophosphatase (194 aa).

Asp-76 (proton acceptor) is an active-site residue.

It belongs to the Maf family. YhdE subfamily. It depends on a divalent metal cation as a cofactor.

Its subcellular location is the cytoplasm. The catalysed reaction is dTTP + H2O = dTMP + diphosphate + H(+). It carries out the reaction UTP + H2O = UMP + diphosphate + H(+). In terms of biological role, nucleoside triphosphate pyrophosphatase that hydrolyzes dTTP and UTP. May have a dual role in cell division arrest and in preventing the incorporation of modified nucleotides into cellular nucleic acids. The protein is dTTP/UTP pyrophosphatase of Shewanella sp. (strain MR-7).